We begin with the raw amino-acid sequence, 1164 residues long: Shugoshin 2A (1164 aa).

Residues 62 to 113 (LSKEKENSRRITTEKMQLQKEVEKLNFENTFLRLKLNTLNKKLVEIESHVSN) adopt a coiled-coil conformation. Disordered regions lie at residues 160–269 (SEND…VTMR), 287–314 (HQPT…NTQR), 390–492 (RKVK…PFSR), 521–541 (TFVI…DKDT), and 917–992 (PLDS…ETHG). Positions 182–198 (SKTSPDSTSSVSRQPSS) are enriched in low complexity. 2 stretches are compositionally biased toward polar residues: residues 238–247 (DQSPKSSLSE) and 288–299 (QPTSSPGSNWNN). Basic and acidic residues predominate over residues 390–412 (RKVKGASSDKKRESSKRECKDGS). Over residues 443–472 (CISSTEQPSQVNTQKKRTLQNSSDQENIQN) the composition is skewed to polar residues. The segment covering 525–541 (RKSEKDNLFPNQEDKDT) has biased composition (basic and acidic residues). Residues 934-948 (GEQTNLPKMQKQSAG) show a composition bias toward polar residues. Ser1042 carries the post-translational modification Phosphoserine. Positions 1092 to 1164 (ITTGTRNPHH…EPSLRSKMRR (73 aa)) are disordered. Low complexity predominate over residues 1112 to 1125 (TSLVLVDTSSVSDT). Residues 1126–1140 (NPANPENESEGQSSH) are compositionally biased toward polar residues.

This sequence belongs to the shugoshin family. In terms of assembly, part of an astrin (SPAG5)-kinastrin (SKAP) complex containing KNSTRN, SPAG5, PLK1, DYNLL1 and SGO2A. Interacts with CDCA8. Interacts with PPP2CA. As to expression, ubiquitously expressed in proliferating cells. Highly expressed in the testis and oocytes.

The protein localises to the nucleus. Its subcellular location is the chromosome. It localises to the centromere. It is found in the kinetochore. Cooperates with PPP2CA to protect centromeric cohesin from separase-mediated cleavage in oocytes specifically during meiosis I. Has a crucial role in protecting REC8 at centromeres from cleavage by separase. During meiosis, protects centromeric cohesion complexes until metaphase II/anaphase II transition, preventing premature release of meiosis-specific REC8 cohesin complexes from anaphase I centromeres. Is thus essential for an accurate gametogenesis. May act by targeting PPP2CA to centromeres, thus leading to cohesin dephosphorylation. Essential for recruiting KIF2C to the inner centromere and for correcting defective kinetochore attachments. Involved in centromeric enrichment of AUKRB in prometaphase. The polypeptide is Shugoshin 2A (Mus musculus (Mouse)).